A 509-amino-acid chain; its full sequence is Serine/threonine protein kinase OSK4 (509 aa).

In terms of domain architecture, Protein kinase spans 17 to 269 (YNLGRTLGIG…IREIREHQWF (253 aa)). ATP contacts are provided by residues 23–31 (LGIGSFGKV) and K46. D140 (proton acceptor) is an active-site residue. The UBA domain occupies 290 to 330 (MIDEDTLQDVVNLGYEKDHVCESLRNRLQNEATVAYYLLLD). The KA1 domain maps to 460–508 (NGRLPAVIKFEIQLYKSRDEKYLLDMQRVTGPQLLFLDFCAAFLTKLRV).

This sequence belongs to the protein kinase superfamily. Ser/Thr protein kinase family. In terms of assembly, interacts with HDR1. Strongly expressed in immature seeds. Mostly expressed in panicles, leaf sheaths and roots, and to a lower extent, in germinating seeds and leaf blades.

It localises to the nucleus. It carries out the reaction L-seryl-[protein] + ATP = O-phospho-L-seryl-[protein] + ADP + H(+). The catalysed reaction is L-threonyl-[protein] + ATP = O-phospho-L-threonyl-[protein] + ADP + H(+). In terms of biological role, suppressor of flowering in long days (LD) via the that up-regulation of HD1 and the down-regulation of EHD1. Can phosphorylate HD1 in the presence of HDR1. The polypeptide is Serine/threonine protein kinase OSK4 (Oryza sativa subsp. indica (Rice)).